Consider the following 867-residue polypeptide: Leucine--tRNA ligase (867 aa).

The 'HIGH' region signature appears at proline 43–histidine 53. The short motif at lysine 627–serine 631 is the 'KMSKS' region element. Lysine 630 is a binding site for ATP.

The protein belongs to the class-I aminoacyl-tRNA synthetase family.

Its subcellular location is the cytoplasm. It catalyses the reaction tRNA(Leu) + L-leucine + ATP = L-leucyl-tRNA(Leu) + AMP + diphosphate. In Phenylobacterium zucineum (strain HLK1), this protein is Leucine--tRNA ligase.